Consider the following 224-residue polypeptide: Ribose-5-phosphate isomerase A (224 aa).

Substrate-binding positions include 34 to 37, 87 to 90, and 100 to 103; these read TGST, DGAD, and KGGG. Glutamate 109 serves as the catalytic Proton acceptor. Lysine 127 lines the substrate pocket.

It belongs to the ribose 5-phosphate isomerase family. Homodimer.

It catalyses the reaction aldehydo-D-ribose 5-phosphate = D-ribulose 5-phosphate. It functions in the pathway carbohydrate degradation; pentose phosphate pathway; D-ribose 5-phosphate from D-ribulose 5-phosphate (non-oxidative stage): step 1/1. Functionally, catalyzes the reversible conversion of ribose-5-phosphate to ribulose 5-phosphate. This Francisella tularensis subsp. tularensis (strain FSC 198) protein is Ribose-5-phosphate isomerase A.